A 259-amino-acid polypeptide reads, in one-letter code: Phosphatidylglycerol--prolipoprotein diacylglyceryl transferase (259 aa).

A run of 4 helical transmembrane segments spans residues 12 to 32 (LAIH…VYLA), 41 to 61 (ISSD…IVGA), 80 to 100 (IIAI…GALV), and 109 to 129 (VLNP…AQAI). Position 131 (R131) interacts with a 1,2-diacyl-sn-glycero-3-phospho-(1'-sn-glycerol). The next 3 membrane-spanning stretches (helical) occupy residues 167 to 187 (IPTF…IMMW), 194 to 214 (LLDG…RLVI), and 226 to 246 (GIRI…IFVI).

The protein belongs to the Lgt family.

The protein localises to the cell membrane. The enzyme catalyses L-cysteinyl-[prolipoprotein] + a 1,2-diacyl-sn-glycero-3-phospho-(1'-sn-glycerol) = an S-1,2-diacyl-sn-glyceryl-L-cysteinyl-[prolipoprotein] + sn-glycerol 1-phosphate + H(+). It functions in the pathway protein modification; lipoprotein biosynthesis (diacylglyceryl transfer). Functionally, catalyzes the transfer of the diacylglyceryl group from phosphatidylglycerol to the sulfhydryl group of the N-terminal cysteine of a prolipoprotein, the first step in the formation of mature lipoproteins. This Streptococcus pyogenes serotype M49 (strain NZ131) protein is Phosphatidylglycerol--prolipoprotein diacylglyceryl transferase.